The chain runs to 180 residues: Large ribosomal subunit protein uL22 (180 aa).

Residues Val-111 to Asp-180 form a disordered region. Residues Pro-142 to Pro-166 show a composition bias toward basic residues. The span at Glu-171–Asp-180 shows a compositional bias: basic and acidic residues.

This sequence belongs to the universal ribosomal protein uL22 family. Part of the 50S ribosomal subunit.

In terms of biological role, this protein binds specifically to 23S rRNA; its binding is stimulated by other ribosomal proteins, e.g. L4, L17, and L20. It is important during the early stages of 50S assembly. It makes multiple contacts with different domains of the 23S rRNA in the assembled 50S subunit and ribosome. The globular domain of the protein is located near the polypeptide exit tunnel on the outside of the subunit, while an extended beta-hairpin is found that lines the wall of the exit tunnel in the center of the 70S ribosome. This is Large ribosomal subunit protein uL22 from Mycobacterium avium (strain 104).